Reading from the N-terminus, the 1025-residue chain is Putative calcium-transporting ATPase 11, plasma membrane-type (1025 aa).

Residues 1–157 are Cytoplasmic-facing; sequence MSNLLKDFEV…NRYTEKPARS (157 aa). Residues 19 to 30 are interaction with calmodulin; the sequence is ARQRWRSSVGLV. Residues 158–178 traverse the membrane as a helical segment; sequence FLTFVWEALQDITLIILMVCA. The Lumenal segment spans residues 179–196; it reads VVSIGVGVATEGFPKGMY. The helical transmembrane segment at 197–217 threads the bilayer; the sequence is DGTGILLSIILVVMVTAISDY. Topologically, residues 218 to 345 are cytoplasmic; sequence KQSLQFRDLD…EDETPLQVKL (128 aa). The helical transmembrane segment at 346–365 threads the bilayer; sequence NGVATIIGKIGLGFAVLTFV. Over 366 to 395 the chain is Lumenal; sequence VLCIRFVVEKATAGSITEWSSEDALTLLDY. The chain crosses the membrane as a helical span at residues 396 to 413; it reads FAIAVTIIVVAVPEGLPL. The Cytoplasmic portion of the chain corresponds to 414-801; it reads AVTLSLAFAM…KWGRAVYINI (388 aa). Residue Asp-451 is the 4-aspartylphosphate intermediate of the active site. The Mg(2+) site is built by Asp-746 and Asp-750. A helical membrane pass occupies residues 802–820; that stretch reads QKFVQFQLTVNVVALIINF. The Lumenal portion of the chain corresponds to 821 to 831; sequence VSACITGSAPL. Residues 832 to 852 traverse the membrane as a helical segment; the sequence is TAVQLLWVNMIMDTLGALALA. The Cytoplasmic segment spans residues 853 to 872; that stretch reads TEPPNEGLMKRQPIGRTASF. The helical transmembrane segment at 873 to 895 threads the bilayer; the sequence is ITRAMWRNIIGQSIYQLIVLGIL. Topologically, residues 896–907 are lumenal; that stretch reads NFAGKQILNLNG. Residues 908-929 form a helical membrane-spanning segment; sequence PDSTIVLNTIIFNSFVFCQVFN. Residues 930–947 are Cytoplasmic-facing; that stretch reads EVNSREIEKINVFEGMFK. A helical membrane pass occupies residues 948 to 969; the sequence is SWVFVAVMTATVGFQVIIVEFL. Topologically, residues 970–979 are lumenal; it reads GAFASTVPLS. A helical transmembrane segment spans residues 980–1001; the sequence is WQHWLLCILIGSVSMILAVGLK. Residues 1002–1025 lie on the Cytoplasmic side of the membrane; the sequence is CIPVESNRHHDGYELLPSGPSDSA.

This sequence belongs to the cation transport ATPase (P-type) (TC 3.A.3) family. Type IIB subfamily.

The protein localises to the membrane. It carries out the reaction Ca(2+)(in) + ATP + H2O = Ca(2+)(out) + ADP + phosphate + H(+). Its activity is regulated as follows. Activated by calmodulin. Functionally, this magnesium-dependent enzyme catalyzes the hydrolysis of ATP coupled with the translocation of calcium from the cytosol out of the cell or into organelles. The chain is Putative calcium-transporting ATPase 11, plasma membrane-type (ACA11) from Arabidopsis thaliana (Mouse-ear cress).